A 220-amino-acid polypeptide reads, in one-letter code: B-cell antigen receptor complex-associated protein alpha chain (220 aa).

The N-terminal stretch at 1-28 (MPGGLEALRALPLLLFLSYACLGPGCQA) is a signal peptide. The 89-residue stretch at 29-117 (LRVEGGPPSL…ILKRSCGTYL (89 aa)) folds into the Ig-like C2-type domain. The Extracellular segment spans residues 29–137 (LRVEGGPPSL…LDMGEGTKNR (109 aa)). A disulfide bridge connects residues Cys-50 and Cys-101. 2 N-linked (GlcNAc...) asparagine glycosylation sites follow: Asn-58 and Asn-68. The helical transmembrane segment at 138 to 159 (IITAEGIILLFCAVVPGTLLLF) threads the bilayer. At 160–220 (RKRWQNEKFG…HIGDAQLEKP (61 aa)) the chain is on the cytoplasmic side. The ITAM domain maps to 171-199 (DMPDDYEDENLYEGLNLDDCSMYEDISRG). A phosphotyrosine; by SRC-type Tyr-kinases mark is found at Tyr-182 and Tyr-193. Position 198 is an asymmetric dimethylarginine; by PRMT1 (Arg-198). Tyr-204 carries the post-translational modification Phosphotyrosine; by Tyr-kinases.

In terms of assembly, heterodimer of alpha and beta chains; disulfide-linked. Part of the B-cell antigen receptor complex where the alpha/beta chain heterodimer is non-covalently associated with an antigen-specific membrane-bound surface immunoglobulin of two heavy chains and two light chains. Interacts through its phosphorylated ITAM domain with the SH2 domains of SYK which stimulates SYK autophosphorylation and activation. Also interacts, when phosphorylated on Tyr-204, with the SH2 domain of BLNK/SLP65, bringing BLNK into proximity with SYK and allowing SYK to phosphorylate BLNK which is necessary for trafficking of the BCR to late endosomes. Interacts with Src-family tyrosine kinases including FYN and LYN, increasing their activity. Phosphorylated on tyrosine, serine and threonine residues upon B-cell activation. Phosphorylation of tyrosine residues by Src-family kinases, including LYN, is an early and essential feature of the BCR signaling cascade. The phosphorylated tyrosines serve as docking sites for SH2-domain containing kinases, leading to their activation which in turn leads to phosphorylation of downstream targets. Phosphorylation of serine and threonine residues may prevent subsequent tyrosine phosphorylation. In terms of processing, arginine methylation in the ITAM domain may interfere with the binding of SYK. It promotes signals leading to B-cell differentiation. As to expression, B-cells.

The protein resides in the cell membrane. Required in cooperation with CD79B for initiation of the signal transduction cascade activated by binding of antigen to the B-cell antigen receptor complex (BCR) which leads to internalization of the complex, trafficking to late endosomes and antigen presentation. Also required for BCR surface expression and for efficient differentiation of pro- and pre-B-cells. Stimulates SYK autophosphorylation and activation. Binds to BLNK, bringing BLNK into proximity with SYK and allowing SYK to phosphorylate BLNK. Also interacts with and increases activity of some Src-family tyrosine kinases. Represses BCR signaling during development of immature B-cells. This chain is B-cell antigen receptor complex-associated protein alpha chain (Cd79a), found in Mus musculus (Mouse).